A 422-amino-acid polypeptide reads, in one-letter code: Tyrosine--tRNA ligase (422 aa).

L-tyrosine is bound at residue tyrosine 36. Residues proline 41 to histidine 50 carry the 'HIGH' region motif. Positions 174 and 178 each coordinate L-tyrosine. Positions lysine 234 to threonine 238 match the 'KMSKS' region motif. Lysine 237 contacts ATP. An S4 RNA-binding domain is found at threonine 356–tryptophan 420.

This sequence belongs to the class-I aminoacyl-tRNA synthetase family. TyrS type 1 subfamily. In terms of assembly, homodimer.

The protein resides in the cytoplasm. The enzyme catalyses tRNA(Tyr) + L-tyrosine + ATP = L-tyrosyl-tRNA(Tyr) + AMP + diphosphate + H(+). Its function is as follows. Catalyzes the attachment of tyrosine to tRNA(Tyr) in a two-step reaction: tyrosine is first activated by ATP to form Tyr-AMP and then transferred to the acceptor end of tRNA(Tyr). This chain is Tyrosine--tRNA ligase, found in Aeromonas hydrophila subsp. hydrophila (strain ATCC 7966 / DSM 30187 / BCRC 13018 / CCUG 14551 / JCM 1027 / KCTC 2358 / NCIMB 9240 / NCTC 8049).